Consider the following 533-residue polypeptide: Acid-sensing ion channel 2 (533 aa).

Positions 1–16 (MDLKEACGSEASRETE) are enriched in basic and acidic residues. The segment at 1–23 (MDLKEACGSEASRETESGGMGSL) is disordered. Residues 1–68 (MDLKEACGSE…STSRRLLWSA (68 aa)) lie on the Cytoplasmic side of the membrane. Residues 69 to 89 (ALLASLVLLVLESTERLAYFL) form a helical membrane-spanning segment. The Extracellular portion of the chain corresponds to 90 to 445 (SYPHVTSVDA…ETIEQKKAYE (356 aa)). Disulfide bonds link cysteine 113/cysteine 214, cysteine 310/cysteine 385, cysteine 328/cysteine 381, cysteine 332/cysteine 379, cysteine 341/cysteine 363, and cysteine 343/cysteine 355. Asparagine 163 carries an N-linked (GlcNAc...) asparagine glycan. 2 N-linked (GlcNAc...) asparagine glycosylation sites follow: asparagine 386 and asparagine 413. Residues 446 to 466 (VAGLLGDIGGQMGLFIGASIL) form a helical membrane-spanning segment. Positions 462-464 (GAS) match the GAS motif; ion selectivity filter motif. The Cytoplasmic segment spans residues 467–533 (TLLELFDYAY…TLGTLEEIAC (67 aa)).

The protein belongs to the amiloride-sensitive sodium channel (TC 1.A.6) family. ASIC2 subfamily. As to quaternary structure, can form homotrimers; probably non-functional. Heterotrimer; could form functional heterotrimers producing channel with specific properties depending on their composition. Expressed in central nervous system.

The protein resides in the cell membrane. The catalysed reaction is Na(+)(in) = Na(+)(out). With respect to regulation, inhibited by the diuretic drug amiloride. Could form pH-gated heterotrimeric sodium channels that act as postsynaptic excitatory sensors in the nervous system, generating rapid, transient inward currents that fully desensitize upon extracellular acidification. This Danio rerio (Zebrafish) protein is Acid-sensing ion channel 2 (asic2).